The chain runs to 222 residues: CEACAM1-like protein UL7 (222 aa).

N-linked (GlcNAc...) asparagine; by host glycosylation is found at Asn50, Asn56, Asn60, Asn71, Asn105, Asn109, Asn125, Asn132, Asn147, Asn164, Asn168, and Asn189. The helical transmembrane segment at 193–213 (LALVGVIVFIALIVVCIMGWW) threads the bilayer.

This sequence belongs to the RL11 family. Interacts with host FLT3. In terms of processing, highly glycosylated.

It localises to the secreted. Its subcellular location is the host cell membrane. Functionally, plays a role in modulating the host immune response and affecting host cytokine production. Structurally and functionally homolog of host CEACAM1, induces endothelial cell angiogenesis. Ligands for host FLT3 receptor, activates the PI3K/AKT and MAPK/ERK pathways. In turn, triggers hematopoietic progenitor cell and monocyte differentiation leading to virus reactivation. The polypeptide is CEACAM1-like protein UL7 (UL7) (Human cytomegalovirus (strain AD169) (HHV-5)).